The sequence spans 426 residues: Tryptophan--tRNA ligase (426 aa).

The 'HIGH' region motif lies at 66–74 (PSGEMHLGN). The 'KMSKS' region signature appears at 314 to 318 (KMSSS).

It belongs to the class-I aminoacyl-tRNA synthetase family.

The protein resides in the cytoplasm. The enzyme catalyses tRNA(Trp) + L-tryptophan + ATP = L-tryptophyl-tRNA(Trp) + AMP + diphosphate + H(+). This Thermoplasma acidophilum (strain ATCC 25905 / DSM 1728 / JCM 9062 / NBRC 15155 / AMRC-C165) protein is Tryptophan--tRNA ligase.